Reading from the N-terminus, the 350-residue chain is tRNA uridine(34) hydroxylase (350 aa).

A Rhodanese domain is found at 146 to 240 (DDPDAVFIDM…YARRAREQGL (95 aa)). Cysteine 200 functions as the Cysteine persulfide intermediate in the catalytic mechanism. Basic and acidic residues predominate over residues 319-328 (RRRRAGRENG). A disordered region spans residues 319–350 (RRRRAGRENGNKIFNKSRGRLNSKLSIPDPAE).

Belongs to the TrhO family.

The catalysed reaction is uridine(34) in tRNA + AH2 + O2 = 5-hydroxyuridine(34) in tRNA + A + H2O. Its function is as follows. Catalyzes oxygen-dependent 5-hydroxyuridine (ho5U) modification at position 34 in tRNAs. This chain is tRNA uridine(34) hydroxylase, found in Salmonella choleraesuis (strain SC-B67).